The following is a 699-amino-acid chain: MLDPIIHKFKYGQHTVILDIGTIARQANAAVMVSMSDTTVLVTVVSSNQVRLEQDFFPLVVNYQERTYAAGKFPGGFFRREGRPSENETLTSRLIDRPIRPLFPKGFINDVQVVATVVSVNPQVNPDIVAIIGVSAALSLSDIPFFGPIGAARVGYIKNQYVLNPTTTELSNSKLDLVISGTESNILMVESESCLLSEKEILDAIIFGHEQQQIVIHNINKLVKKVGKTKYSWNEKEVNISLKTYLSELYESRAQDIYCFFDKKERHAQVDSIKKDIVKTVLNSYQHAAVDEKEIMYLLNYLEAQSIRYRILTNKLRIDGRSQDTIRKIDIKTGILPRTHGSALFTRGDTQALVAVTLGTERDAQNIDGLTGIRVDRFLLHYNFPPYCVGEIGVIGAPKRREIGHGRLAKRGMLAVMPNANEFPYTIRVVSEITESNGSSSMASICGTSLALMDAGVPIKAAVAGVAMGLIKEGNDFVVLSDIVSDEDHIGDMDFKVSGSRQGITALQMDIKTDGITYDIINIALKKAKNARLQILDVMEQIIKFPNQEISKFAPRIYSIKVNPDKIKDVIGKGGSVIRSLTEETNTIIDIEDNGIIKIVALDYDKAKQAIRRINDITANVEIGAVYTGKVSHIVEFGAFVTILSGKEGLVHISQISERRINKVTDYLKLGQKVLVKVLEIDRQGRIRLSMKGVHQVSA.

Residues Asp488 and Asp494 each contribute to the Mg(2+) site. In terms of domain architecture, KH spans 555 to 614 (PRIYSIKVNPDKIKDVIGKGGSVIRSLTEETNTIIDIEDNGIIKIVALDYDKAKQAIRRI). The 69-residue stretch at 624–692 (GAVYTGKVSH…RQGRIRLSMK (69 aa)) folds into the S1 motif domain.

This sequence belongs to the polyribonucleotide nucleotidyltransferase family. In terms of assembly, component of the RNA degradosome, which is a multiprotein complex involved in RNA processing and mRNA degradation. The cofactor is Mg(2+).

Its subcellular location is the cytoplasm. The enzyme catalyses RNA(n+1) + phosphate = RNA(n) + a ribonucleoside 5'-diphosphate. Its function is as follows. Involved in mRNA degradation. Catalyzes the phosphorolysis of single-stranded polyribonucleotides processively in the 3'- to 5'-direction. The protein is Polyribonucleotide nucleotidyltransferase of Blochmanniella pennsylvanica (strain BPEN).